A 152-amino-acid chain; its full sequence is Small ribosomal subunit protein uS13A (152 aa).

Belongs to the universal ribosomal protein uS13 family. Component of the small ribosomal subunit (SSU). Mature yeast ribosomes consist of a small (40S) and a large (60S) subunit. The 40S small subunit contains 1 molecule of ribosomal RNA (18S rRNA) and at least 33 different proteins. The large 60S subunit contains 3 rRNA molecules (25S, 5.8S and 5S rRNA) and at least 46 different proteins.

The protein resides in the cytoplasm. Its function is as follows. Component of the ribosome, a large ribonucleoprotein complex responsible for the synthesis of proteins in the cell. The small ribosomal subunit (SSU) binds messenger RNAs (mRNAs) and translates the encoded message by selecting cognate aminoacyl-transfer RNA (tRNA) molecules. The large subunit (LSU) contains the ribosomal catalytic site termed the peptidyl transferase center (PTC), which catalyzes the formation of peptide bonds, thereby polymerizing the amino acids delivered by tRNAs into a polypeptide chain. The nascent polypeptides leave the ribosome through a tunnel in the LSU and interact with protein factors that function in enzymatic processing, targeting, and the membrane insertion of nascent chains at the exit of the ribosomal tunnel. This is Small ribosomal subunit protein uS13A (rps1801) from Schizosaccharomyces pombe (strain 972 / ATCC 24843) (Fission yeast).